The primary structure comprises 218 residues: MEWSQIFHDITTKHDFKAMHDFLEKEYSTAIVYPDRENIYQAFDLTPFENIKVVILGQDPYHGPNQAHGLAFSVQPNAKFPPSLRNMYKELADDIGCVRQTPHLQDWAREGVLLLNTVLTVRQGEANSHRDIGWETFTDEIIKAVSDYKEHVVFILWGKPAQQKIKLIDTSKHCIIKSVHPSPLSAYRGFFGSKPYSKANAYLESVGKSPINWCESEA.

The active-site Proton acceptor is the D59.

Belongs to the uracil-DNA glycosylase (UDG) superfamily. UNG family.

It is found in the cytoplasm. The catalysed reaction is Hydrolyzes single-stranded DNA or mismatched double-stranded DNA and polynucleotides, releasing free uracil.. Excises uracil residues from the DNA which can arise as a result of misincorporation of dUMP residues by DNA polymerase or due to deamination of cytosine. The protein is Uracil-DNA glycosylase of Staphylococcus aureus (strain JH1).